Reading from the N-terminus, the 372-residue chain is Queuine tRNA-ribosyltransferase (372 aa).

Aspartate 89 functions as the Proton acceptor in the catalytic mechanism. Substrate-binding positions include 89-93 (DSGGF), aspartate 161, and glycine 232. Positions 262 to 268 (GIGDLPS) are RNA binding. Aspartate 281 functions as the Nucleophile in the catalytic mechanism. The tract at residues 286–290 (TKAAR) is RNA binding; important for wobble base 34 recognition. Zn(2+) contacts are provided by cysteine 319, cysteine 321, cysteine 324, and histidine 351.

Belongs to the queuine tRNA-ribosyltransferase family. As to quaternary structure, homodimer. Within each dimer, one monomer is responsible for RNA recognition and catalysis, while the other monomer binds to the replacement base PreQ1. Zn(2+) serves as cofactor.

The catalysed reaction is 7-aminomethyl-7-carbaguanine + guanosine(34) in tRNA = 7-aminomethyl-7-carbaguanosine(34) in tRNA + guanine. The protein operates within tRNA modification; tRNA-queuosine biosynthesis. Functionally, catalyzes the base-exchange of a guanine (G) residue with the queuine precursor 7-aminomethyl-7-deazaguanine (PreQ1) at position 34 (anticodon wobble position) in tRNAs with GU(N) anticodons (tRNA-Asp, -Asn, -His and -Tyr). Catalysis occurs through a double-displacement mechanism. The nucleophile active site attacks the C1' of nucleotide 34 to detach the guanine base from the RNA, forming a covalent enzyme-RNA intermediate. The proton acceptor active site deprotonates the incoming PreQ1, allowing a nucleophilic attack on the C1' of the ribose to form the product. After dissociation, two additional enzymatic reactions on the tRNA convert PreQ1 to queuine (Q), resulting in the hypermodified nucleoside queuosine (7-(((4,5-cis-dihydroxy-2-cyclopenten-1-yl)amino)methyl)-7-deazaguanosine). The polypeptide is Queuine tRNA-ribosyltransferase (Chlamydia trachomatis serovar L2 (strain ATCC VR-902B / DSM 19102 / 434/Bu)).